The primary structure comprises 144 residues: Giant hemoglobin AIII chain (144 aa).

In terms of domain architecture, Globin spans Glu-2–Asn-144. A heme b-binding site is contributed by His-95.

This sequence belongs to the globin family. As to quaternary structure, giant hemoglobin is composed of four heme-containing chains (AI to AIV), and two linker chains (AV and AVI).

This is Giant hemoglobin AIII chain from Lamellibrachia sp. (Deep-sea giant tube worm).